The primary structure comprises 350 residues: L-threonine 3-dehydrogenase (350 aa).

Cys42 provides a ligand contact to Zn(2+). Residues Thr44 and His47 each act as charge relay system in the active site. Positions 67, 68, 97, 100, 103, and 111 each coordinate Zn(2+). Residues Leu179, Glu199, Arg204, Leu266–Leu268, and Ile291–Thr292 contribute to the NAD(+) site.

It belongs to the zinc-containing alcohol dehydrogenase family. As to quaternary structure, homotetramer. Requires Zn(2+) as cofactor.

Its subcellular location is the cytoplasm. It carries out the reaction L-threonine + NAD(+) = (2S)-2-amino-3-oxobutanoate + NADH + H(+). Its pathway is amino-acid degradation; L-threonine degradation via oxydo-reductase pathway; glycine from L-threonine: step 1/2. In terms of biological role, catalyzes the NAD(+)-dependent oxidation of L-threonine to 2-amino-3-ketobutyrate. To a lesser extent, also catalyzes the oxidation of L-serine. The chain is L-threonine 3-dehydrogenase from Thermococcus kodakarensis (strain ATCC BAA-918 / JCM 12380 / KOD1) (Pyrococcus kodakaraensis (strain KOD1)).